A 169-amino-acid polypeptide reads, in one-letter code: Der GTPase-activating protein YihI (169 aa).

Disordered regions lie at residues 1-75 (MKPS…IPLG) and 144-169 (GLSY…LRGN). Residues 10 to 19 (SKGHAKARRK) show a composition bias toward basic residues. A compositionally biased stretch (basic and acidic residues) spans 20 to 30 (TREELDQEARD). Residues 31–40 (RKRQKKRRGH) show a composition bias toward basic residues. The segment covering 49-58 (GNTTSGSKGQ) has biased composition (polar residues). Over residues 147-159 (YDDDEEEEEDEKQ) the composition is skewed to acidic residues. Positions 160 to 169 (EDMMRLLRGN) are enriched in basic and acidic residues.

Belongs to the YihI family. As to quaternary structure, interacts with Der.

In terms of biological role, a GTPase-activating protein (GAP) that modifies Der/EngA GTPase function. May play a role in ribosome biogenesis. This is Der GTPase-activating protein YihI from Escherichia coli (strain 55989 / EAEC).